The following is a 417-amino-acid chain: FK506-binding protein 3 (417 aa).

2 disordered regions span residues 42-129 (SLDD…LSPE) and 191-307 (EGCG…DKPK). Composition is skewed to acidic residues over residues 61 to 84 (FDDEDDLLADSEEEEEEESEEESE), 99 to 120 (SEEEDSEEEDSEGEDSDDEFEE), and 197 to 222 (CACDDDSDYDLTPDEEDILDMEDASD). Basic and acidic residues-rich tracts occupy residues 236–249 (ANEKRKADEDEPKA) and 256–307 (DQKD…DKPK). The PPIase FKBP-type domain maps to 331-417 (GARVGMRYIG…TFDVKLVSLK (87 aa)).

This sequence belongs to the FKBP-type PPIase family. FKBP3/4 subfamily.

The protein resides in the nucleus. It is found in the nucleolus. It catalyses the reaction [protein]-peptidylproline (omega=180) = [protein]-peptidylproline (omega=0). With respect to regulation, inhibited by both FK506 and rapamycin. Functionally, PPIases accelerate the folding of proteins. It catalyzes the cis-trans isomerization of proline imidic peptide bonds in oligopeptides. In Eremothecium gossypii (strain ATCC 10895 / CBS 109.51 / FGSC 9923 / NRRL Y-1056) (Yeast), this protein is FK506-binding protein 3 (FPR3).